The following is a 270-amino-acid chain: Putative pyruvate, phosphate dikinase regulatory protein (270 aa).

148-155 (GVSRTSKT) serves as a coordination point for ADP.

The protein belongs to the pyruvate, phosphate/water dikinase regulatory protein family. PDRP subfamily.

It carries out the reaction N(tele)-phospho-L-histidyl/L-threonyl-[pyruvate, phosphate dikinase] + ADP = N(tele)-phospho-L-histidyl/O-phospho-L-threonyl-[pyruvate, phosphate dikinase] + AMP + H(+). The enzyme catalyses N(tele)-phospho-L-histidyl/O-phospho-L-threonyl-[pyruvate, phosphate dikinase] + phosphate + H(+) = N(tele)-phospho-L-histidyl/L-threonyl-[pyruvate, phosphate dikinase] + diphosphate. Bifunctional serine/threonine kinase and phosphorylase involved in the regulation of the pyruvate, phosphate dikinase (PPDK) by catalyzing its phosphorylation/dephosphorylation. In Bacillus cytotoxicus (strain DSM 22905 / CIP 110041 / 391-98 / NVH 391-98), this protein is Putative pyruvate, phosphate dikinase regulatory protein.